A 99-amino-acid chain; its full sequence is Ferredoxin, heterocyst (99 aa).

In terms of domain architecture, 2Fe-2S ferredoxin-type spans 4-96; the sequence is YQVRLINKKE…NCTIKTHQEP (93 aa). Positions 42, 47, 50, and 80 each coordinate [2Fe-2S] cluster.

Belongs to the 2Fe2S plant-type ferredoxin family. The cofactor is [2Fe-2S] cluster.

Its function is as follows. Ferredoxins are iron-sulfur proteins that transfer electrons in a wide variety of metabolic reactions. This is Ferredoxin, heterocyst (fdxH) from Microchaete diplosiphon (Fremyella diplosiphon).